Here is a 127-residue protein sequence, read N- to C-terminus: Cyclin-dependent kinase 2-associated protein 2 (127 aa).

Positions 1–47 (MSYKPIAPAPSSTPGSSTPGPGTPVPTAGSVPSPSGSVPGAAAPFRP) are disordered. A compositionally biased stretch (low complexity) spans 9–44 (APSSTPGSSTPGPGTPVPTAGSVPSPSGSVPGAAAP). Residues 65-107 (PPGSQGSQSTYTDLLSVIEEMGKEIRPTYAGSKSAMERLKRGI) form an interaction with CDK2 region.

This sequence belongs to the CDK2AP family. Component of the nucleosome remodeling and deacetylase (NuRD) repressor complex, composed of core proteins MTA1, MTA2, MTA3, RBBP4, RBBP7, HDAC1, HDAC2, MBD2, MBD3, and peripherally associated proteins CDK2AP1, CDK2AP2, GATAD2A, GATAD2B, CHD3, CHD4 and CHD5. The exact stoichiometry of the NuRD complex is unknown, and some subunits such as MBD2 and MBD3, GATAD2A and GATAD2B, and CHD3, CHD4 and CHD5 define mutually exclusive NuRD complexes. Interacts with CDK2AP1. Interacts with CDK2. Interacts with MAPK1. Post-translationally, phosphorylated by MAPK1 and CDK2. Oocytes (at protein level).

It is found in the cytoplasm. The protein localises to the nucleus. In terms of biological role, acts as a component of the histone deacetylase NuRD complex which participates in the remodeling of chromatin. Inhibits cell cycle G1/S phase transition by repressing CDK2 expression and activation; represses CDK2 activation by inhibiting its interaction with cyclin E and A. Plays a role in regulating the self-renewal of embryonic stem cells (ESCs) and in maintaining cell survival during terminal differentiation of ESCs. Regulates microtubule organization of metaphase II oocytes. The chain is Cyclin-dependent kinase 2-associated protein 2 (Cdk2ap2) from Mus musculus (Mouse).